Reading from the N-terminus, the 221-residue chain is Small ribosomal subunit protein uS2 (221 aa).

Positions 202–221 (KVKMPQQNQRGRPQRRFQRR) are disordered.

It belongs to the universal ribosomal protein uS2 family.

The chain is Small ribosomal subunit protein uS2 from Methanococcus vannielii (strain ATCC 35089 / DSM 1224 / JCM 13029 / OCM 148 / SB).